The chain runs to 305 residues: MSAALPITAVPACASGWQAMLDLRFGHRAGQGSVLSHARHSGPLRVQKPLHPEGPGICHAVLLHPPGGVAGGDQLQIDVTVEPGAHALLTTPGATRWYKSQGRPAAQRVRLRVEEGAILEWLPQENMLFAGADATMALDLDLAPGARAIGWDAVVLGRYGAGEHWNHTGAAPTAAARLQLHNRLACGGRPLWLEQGELHAGHALLSSPVAWAGLPIQASLWAVAPEPLAAMEPLSEQLAASLPWSDEVRAGASLLAGQGGAPSVLLLRVLARRMEAARAVLHEGWRLLRPALLNQQARPPRLWAT.

Belongs to the UreD family. As to quaternary structure, ureD, UreF and UreG form a complex that acts as a GTP-hydrolysis-dependent molecular chaperone, activating the urease apoprotein by helping to assemble the nickel containing metallocenter of UreC. The UreE protein probably delivers the nickel.

It localises to the cytoplasm. Functionally, required for maturation of urease via the functional incorporation of the urease nickel metallocenter. This chain is Urease accessory protein UreD, found in Delftia acidovorans (strain DSM 14801 / SPH-1).